The chain runs to 259 residues: 5'-nucleotidase SurE (259 aa).

Residues aspartate 8, aspartate 9, serine 40, and asparagine 92 each coordinate a divalent metal cation.

This sequence belongs to the SurE nucleotidase family. Requires a divalent metal cation as cofactor.

Its subcellular location is the cytoplasm. The enzyme catalyses a ribonucleoside 5'-phosphate + H2O = a ribonucleoside + phosphate. Nucleotidase that shows phosphatase activity on nucleoside 5'-monophosphates. This is 5'-nucleotidase SurE from Stenotrophomonas maltophilia (strain K279a).